The sequence spans 215 residues: RWD domain-containing protein C1393.09c (215 aa).

Residues 7–114 enclose the RWD domain; sequence EEREILESIY…SVAKEETNAI (108 aa).

It localises to the cytoplasm. It is found in the nucleus. In Schizosaccharomyces pombe (strain 972 / ATCC 24843) (Fission yeast), this protein is RWD domain-containing protein C1393.09c.